The following is a 263-amino-acid chain: uncharacterized protein (263 aa).

The 116-residue stretch at 6-121 folds into the Response regulatory domain; that stretch reads TAIIADDEPL…RLQTTCERVK (116 aa). A 4-aspartylphosphate modification is found at D58. Positions 158–263 constitute an HTH LytTR-type domain; sequence IKATQGDDIH…RASQSLFKGM (106 aa).

This is an uncharacterized protein from Vibrio parahaemolyticus serotype O3:K6 (strain RIMD 2210633).